Here is a 422-residue protein sequence, read N- to C-terminus: Signal recognition particle receptor FtsY (422 aa).

The tract at residues 39-86 (PERGVVDRSGGYTASSGITFSQTPTTQPAERIDTSGLPAVGDDATVPR) is disordered. The segment covering 50-66 (YTASSGITFSQTPTTQP) has biased composition (polar residues). GTP-binding positions include 230–237 (GVNGTGKT), 312–316 (DTAGR), and 374–377 (TKLD).

Belongs to the GTP-binding SRP family. FtsY subfamily. In terms of assembly, part of the signal recognition particle protein translocation system, which is composed of SRP and FtsY.

Its subcellular location is the cell membrane. The protein localises to the cytoplasm. The catalysed reaction is GTP + H2O = GDP + phosphate + H(+). Functionally, involved in targeting and insertion of nascent membrane proteins into the cytoplasmic membrane. Acts as a receptor for the complex formed by the signal recognition particle (SRP) and the ribosome-nascent chain (RNC). This is Signal recognition particle receptor FtsY from Mycobacterium bovis (strain ATCC BAA-935 / AF2122/97).